The sequence spans 223 residues: Ribonuclease DdI (223 aa).

The first 25 residues, 1 to 25 (MRLIAALLSVLLIASTAQSTVTIYE), serve as a signal peptide directing secretion. C46 and C51 are disulfide-bonded. Residues H63, E113, and H117 contribute to the active site. A disulfide bond links C78 and C120. N-linked (GlcNAc...) asparagine glycosylation is present at N144. Disulfide bonds link C183–C213 and C194–C205.

Belongs to the RNase T2 family.

Its subcellular location is the lysosome. It catalyses the reaction a ribonucleotidyl-ribonucleotide-RNA + H2O = a 3'-end 3'-phospho-ribonucleotide-RNA + a 5'-end dephospho-ribonucleoside-RNA + H(+). Its activity is regulated as follows. Inhibited by Cu(2+) and Zn(2+). Functionally, releases mononucleotides from RNA in the order of 3'-GMP &gt; 3'-UMP &gt; 3'-AMP &gt; 3'-CMP. The sequence is that of Ribonuclease DdI (ddiA) from Dictyostelium discoideum (Social amoeba).